Here is a 919-residue protein sequence, read N- to C-terminus: Valine--tRNA ligase (919 aa).

Positions 66 to 76 (PNVTGQLHMGH) match the 'HIGH' region motif. Residues 562 to 566 (KMSKS) carry the 'KMSKS' region motif. Lysine 565 contributes to the ATP binding site. Residues 852 to 919 (TVDKEAERKR…RISARLEELK (68 aa)) adopt a coiled-coil conformation.

The protein belongs to the class-I aminoacyl-tRNA synthetase family. ValS type 1 subfamily. Monomer.

The protein resides in the cytoplasm. The enzyme catalyses tRNA(Val) + L-valine + ATP = L-valyl-tRNA(Val) + AMP + diphosphate. Functionally, catalyzes the attachment of valine to tRNA(Val). As ValRS can inadvertently accommodate and process structurally similar amino acids such as threonine, to avoid such errors, it has a 'posttransfer' editing activity that hydrolyzes mischarged Thr-tRNA(Val) in a tRNA-dependent manner. The polypeptide is Valine--tRNA ligase (Corynebacterium diphtheriae (strain ATCC 700971 / NCTC 13129 / Biotype gravis)).